A 417-amino-acid chain; its full sequence is Laccase-like protein claX (417 aa).

Belongs to the multicopper oxidase family.

Its function is as follows. Laccase-like protein; part of the gene cluster that mediates the biosynthesis of clavilactone A, a meroterpenoid that features a unique benzo-fused ten-membered carbocyclic ring unit with an alpha,beta-epoxy-gamma-lactone moiety, forming an intriguing 10/5/3 tricyclic nested skeleton. ClaR, ClaS and ClaT are sufficient to produce clavilactone A and the function of claX, if any, has still to be identified. The biosynthesis begins with the prenyltransferase claS that transfers geranyl pyrophosphate (GPP) to hydroquinone to produces geranylhydroquinon. The cytochrome P450 monooxygenase claR then catalyzes the diradical coupling reaction between the intramolecular hydroquinone and allyl moieties to form the benzo-fused ten-membered carbocyclic ring unit of wigantol. Finally the cytochrome P450 monooxygenase claT exquisitely and stereoselectively assembles the alpha,beta-epoxy-gamma-lactone moiety, producing clavilactone A via arnebinol A. In Ampulloclitocybe clavipes (Club foot), this protein is Laccase-like protein claX.